Here is a 610-residue protein sequence, read N- to C-terminus: UvrABC system protein C (610 aa).

Residues 16-94 (SQPGVYRMYD…IKLYQPRYNV (79 aa)) form the GIY-YIG domain. Residues 204-239 (QQVLHQLIERMENASKALNFEEAARIRDQIQAVRRV) form the UVR domain.

The protein belongs to the UvrC family. As to quaternary structure, interacts with UvrB in an incision complex.

It is found in the cytoplasm. Its function is as follows. The UvrABC repair system catalyzes the recognition and processing of DNA lesions. UvrC both incises the 5' and 3' sides of the lesion. The N-terminal half is responsible for the 3' incision and the C-terminal half is responsible for the 5' incision. This is UvrABC system protein C from Serratia proteamaculans (strain 568).